The following is a 166-amino-acid chain: UPF0178 protein BPUM_2255 (166 aa).

It belongs to the UPF0178 family.

In Bacillus pumilus (strain SAFR-032), this protein is UPF0178 protein BPUM_2255.